A 175-amino-acid chain; its full sequence is Lipoprotein signal peptidase (175 aa).

A run of 4 helical transmembrane segments spans residues 25-45 (LWMA…IVIV), 56-76 (VTGF…SFLA), 81-101 (WQRW…VWLL), and 110-130 (FCFA…DRVV). Active-site residues include D136 and D154. A helical transmembrane segment spans residues 146 to 166 (HWPAFNVADCAITVGAVLLIV).

Belongs to the peptidase A8 family.

The protein resides in the cell inner membrane. The catalysed reaction is Release of signal peptides from bacterial membrane prolipoproteins. Hydrolyzes -Xaa-Yaa-Zaa-|-(S,diacylglyceryl)Cys-, in which Xaa is hydrophobic (preferably Leu), and Yaa (Ala or Ser) and Zaa (Gly or Ala) have small, neutral side chains.. Its pathway is protein modification; lipoprotein biosynthesis (signal peptide cleavage). This protein specifically catalyzes the removal of signal peptides from prolipoproteins. The protein is Lipoprotein signal peptidase of Cupriavidus necator (strain ATCC 17699 / DSM 428 / KCTC 22496 / NCIMB 10442 / H16 / Stanier 337) (Ralstonia eutropha).